The chain runs to 340 residues: Hydroxyurea phosphotransferase (340 aa).

Residue aspartate 240 is the Proton acceptor of the active site.

This sequence belongs to the aminoglycoside phosphotransferase family.

Potential phosphotransferase that inactivates hydroxyurea by phosphorylation of the hydroxy group in the hydroxylamine moiety. The polypeptide is Hydroxyurea phosphotransferase (hur) (Kitasatospora aureofaciens (Streptomyces aureofaciens)).